The sequence spans 226 residues: 7-cyano-7-deazaguanine synthase (226 aa).

ATP is bound at residue 7-17 (ISGGMDSLVVA). Zn(2+) contacts are provided by Cys187, Cys195, Cys198, and Cys201.

It belongs to the QueC family. The cofactor is Zn(2+).

The catalysed reaction is 7-carboxy-7-deazaguanine + NH4(+) + ATP = 7-cyano-7-deazaguanine + ADP + phosphate + H2O + H(+). It participates in purine metabolism; 7-cyano-7-deazaguanine biosynthesis. Catalyzes the ATP-dependent conversion of 7-carboxy-7-deazaguanine (CDG) to 7-cyano-7-deazaguanine (preQ(0)). The protein is 7-cyano-7-deazaguanine synthase of Chlorobium phaeobacteroides (strain BS1).